An 869-amino-acid polypeptide reads, in one-letter code: MASPYNAGEIEQKWQQRWAEWGLDKTPIASDLPKFYALSMFPYPSGNLHMGHVRNYTITDVIARLKRMQGYQVLHPMGWDAFGLPAENAAIERGIPPKQWTEKNIAQMRAQLQQLGLSIDWEREVATCAPDYYRWTQWLFLEFFQAGLAYQKEATVNWDPIDQTVLANEQVDSEGRSWRSGAMVERKLLRQWFLKITDYAEALLNDLEQLTGWPERVKLMQSHWIGKSVGAYLEFPIKDSQEKIAVFTTRPDTVYGVTYVVLAPEHPLTKVVTTAEQQGTVDEFVAMVAKESEIERTAEDKPKRGVKTGGIAINPFNGEEIPILIADYVLYEYGTGAVMGVPAHDQRDFKFAQDNNLPMQVVIIPDDADNSDVNLTVAYTEAGVMVNSAQFTGMASPKAKQAIIKFAEDNDYGRAKVQYRLRDWLISRQRYWGCPIPIIHCDDCGAVPVPTKDLPVELPDNVEFSGRGPSPLAKLEDWINVPCPSCGKPARRETDTMDTFIDSSWYFLRYADAQNTELPFDGEKVAHWLPVDQYVGGIEHAILHLLYSRFFTKVLADRQLIPVKEPFQKLLTQGMVQGITYKNPTTGKYVPAKDLQTGQQVIDPKDPKDPDSGEPLQVFYEKMSKSKFNGVDPQEVLAKYGADTARMFILFKAPPEKDLEWDDADVEGQFRFLNRVWRLVTDYIGDPAGIRFAVRPETLVTNEPLTKAEKDLRRAIHGAIKEVAEDLNDDYQFNTAISEMMKLSNALIAATDLISFPVYQEGIETLLLLLAPFAPHLTEELWHRLGRTDSIHQQAWLQVDPTALVLDEITLVIQVLGKTRGTITVPASADKTQLEELARNSDLAQRYLEGKTIKKVIVVPGKLVNFVIT.

Positions 42-52 (PYPSGNLHMGH) match the 'HIGH' region motif. Positions 622–626 (KMSKS) match the 'KMSKS' region motif. K625 provides a ligand contact to ATP.

The protein belongs to the class-I aminoacyl-tRNA synthetase family.

It is found in the cytoplasm. It catalyses the reaction tRNA(Leu) + L-leucine + ATP = L-leucyl-tRNA(Leu) + AMP + diphosphate. The chain is Leucine--tRNA ligase from Synechocystis sp. (strain ATCC 27184 / PCC 6803 / Kazusa).